The primary structure comprises 238 residues: Probable transcriptional regulatory protein SPD_1725 (238 aa).

Belongs to the TACO1 family. YeeN subfamily.

The protein localises to the cytoplasm. This is Probable transcriptional regulatory protein SPD_1725 from Streptococcus pneumoniae serotype 2 (strain D39 / NCTC 7466).